The primary structure comprises 67 residues: uncharacterized protein (67 aa).

This is an uncharacterized protein from Caenorhabditis elegans.